A 933-amino-acid chain; its full sequence is DNA repair-scaffolding protein (933 aa).

Disordered regions lie at residues 1-34 (MSGA…LRRG), 67-174 (SEKT…KGTL), and 205-224 (YSSD…IDSE). 3 stretches are compositionally biased toward basic and acidic residues: residues 16–29 (WHIE…ERSQ), 71–87 (GITE…KTET), and 119–132 (RDGR…RLGD). The span at 138 to 148 (PEDEDIEDELQ) shows a compositional bias: acidic residues. A necessary for interaction with RAD51 region spans residues 175–469 (DISDCDSCAS…GTGWTHGHEK (295 aa)). The segment covering 214–224 (DPEHSLFIDSE) has biased composition (basic and acidic residues).

In terms of assembly, found in a complex, at least composed of BLM, RAD51 and SPIDR; the complex formation is mediated by SPIDR. Interacts (via C-terminal region) with BLM; the interaction is direct. Interacts with RAD51; the interaction is direct. Interacts (via the C-terminal region) with FIGNL1 (via N-terminal one-half region); the interaction is direct.

Its subcellular location is the nucleus. Functionally, plays a role in DNA double-strand break (DBS) repair via homologous recombination (HR). Serves as a scaffolding protein that helps to promote the recruitment of DNA-processing enzymes like the helicase BLM and recombinase RAD51 to site of DNA damage, and hence contributes to maintain genomic integrity. This chain is DNA repair-scaffolding protein (Spidr), found in Mus musculus (Mouse).